Reading from the N-terminus, the 397-residue chain is tRNA-specific 2-thiouridylase MnmA (397 aa).

Residues 19–26 (AMSGGVDS) and Leu45 contribute to the ATP site. Cys113 serves as the catalytic Nucleophile. Residues Cys113 and Cys210 are joined by a disulfide bond. Residue Gly137 participates in ATP binding. The interval 160 to 162 (RDQ) is interaction with tRNA. The Cysteine persulfide intermediate role is filled by Cys210.

Belongs to the MnmA/TRMU family.

It localises to the cytoplasm. The enzyme catalyses S-sulfanyl-L-cysteinyl-[protein] + uridine(34) in tRNA + AH2 + ATP = 2-thiouridine(34) in tRNA + L-cysteinyl-[protein] + A + AMP + diphosphate + H(+). In terms of biological role, catalyzes the 2-thiolation of uridine at the wobble position (U34) of tRNA, leading to the formation of s(2)U34. The protein is tRNA-specific 2-thiouridylase MnmA of Bradyrhizobium sp. (strain ORS 278).